A 286-amino-acid chain; its full sequence is Fructose-bisphosphate aldolase (286 aa).

Ser-50 contributes to the D-glyceraldehyde 3-phosphate binding site. Residue Asp-85 is the Proton donor of the active site. Zn(2+)-binding residues include His-86, Asp-107, Glu-137, and His-181. Gly-182 is a dihydroxyacetone phosphate binding site. His-209 is a Zn(2+) binding site. Dihydroxyacetone phosphate is bound by residues 210–212 (GGT) and 231–234 (NVNT).

It belongs to the class II fructose-bisphosphate aldolase family. Zn(2+) is required as a cofactor.

It catalyses the reaction beta-D-fructose 1,6-bisphosphate = D-glyceraldehyde 3-phosphate + dihydroxyacetone phosphate. The protein operates within carbohydrate degradation; glycolysis; D-glyceraldehyde 3-phosphate and glycerone phosphate from D-glucose: step 4/4. Its function is as follows. Catalyzes the aldol condensation of dihydroxyacetone phosphate (DHAP or glycerone-phosphate) with glyceraldehyde 3-phosphate (G3P) to form fructose 1,6-bisphosphate (FBP) in gluconeogenesis and the reverse reaction in glycolysis. The sequence is that of Fructose-bisphosphate aldolase (fba) from Staphylococcus aureus (strain MSSA476).